Reading from the N-terminus, the 397-residue chain is Putative serine/threonine-protein kinase R301 (397 aa).

The region spanning 25-397 (QIKSTSVGSG…IIRHFNSPRL (373 aa)) is the Protein kinase domain. Residues 31–39 (VGSGGSDNI) and Lys-53 contribute to the ATP site. Asp-218 functions as the Proton acceptor in the catalytic mechanism.

It belongs to the protein kinase superfamily. Ser/Thr protein kinase family.

Its subcellular location is the virion. It carries out the reaction L-seryl-[protein] + ATP = O-phospho-L-seryl-[protein] + ADP + H(+). The enzyme catalyses L-threonyl-[protein] + ATP = O-phospho-L-threonyl-[protein] + ADP + H(+). This chain is Putative serine/threonine-protein kinase R301, found in Acanthamoeba polyphaga (Amoeba).